A 211-amino-acid chain; its full sequence is Protein-L-isoaspartate O-methyltransferase (211 aa).

The active site involves Ser-62.

It belongs to the methyltransferase superfamily. L-isoaspartyl/D-aspartyl protein methyltransferase family.

It is found in the cytoplasm. The enzyme catalyses [protein]-L-isoaspartate + S-adenosyl-L-methionine = [protein]-L-isoaspartate alpha-methyl ester + S-adenosyl-L-homocysteine. In terms of biological role, catalyzes the methyl esterification of L-isoaspartyl residues in peptides and proteins that result from spontaneous decomposition of normal L-aspartyl and L-asparaginyl residues. It plays a role in the repair and/or degradation of damaged proteins. This is Protein-L-isoaspartate O-methyltransferase from Shewanella frigidimarina (strain NCIMB 400).